A 188-amino-acid polypeptide reads, in one-letter code: Interferon alpha-2 (188 aa).

Residues 1-23 (MALTFALLVALLVLSCKSSCSVG) form the signal peptide. 2 cysteine pairs are disulfide-bonded: C24–C121 and C52–C161. An O-linked (GalNAc...) threonine glycan is attached at T129.

This sequence belongs to the alpha/beta interferon family. Interacts with IFNAR2.

The protein resides in the secreted. In terms of biological role, produced by macrophages, IFN-alpha have antiviral activities. The sequence is that of Interferon alpha-2 (IFNA2) from Homo sapiens (Human).